A 164-amino-acid polypeptide reads, in one-letter code: Protein SprT (164 aa).

A SprT-like domain is found at Tyr-13–Val-156. His-69 provides a ligand contact to Zn(2+). Residue Glu-70 is part of the active site. His-73 provides a ligand contact to Zn(2+).

It belongs to the SprT family. It depends on Zn(2+) as a cofactor.

The protein resides in the cytoplasm. This is Protein SprT from Pseudomonas syringae pv. syringae (strain B728a).